The primary structure comprises 933 residues: Isoleucine--tRNA ligase (933 aa).

Positions 57 to 67 (PYANGNIHVGH) match the 'HIGH' region motif. Glu-554 is a binding site for L-isoleucyl-5'-AMP. The 'KMSKS' region motif lies at 595 to 599 (KMSKS). Lys-598 is a binding site for ATP.

Belongs to the class-I aminoacyl-tRNA synthetase family. IleS type 1 subfamily. As to quaternary structure, monomer.

It is found in the cytoplasm. It catalyses the reaction tRNA(Ile) + L-isoleucine + ATP = L-isoleucyl-tRNA(Ile) + AMP + diphosphate. Catalyzes the attachment of isoleucine to tRNA(Ile). As IleRS can inadvertently accommodate and process structurally similar amino acids such as valine, to avoid such errors it has two additional distinct tRNA(Ile)-dependent editing activities. One activity is designated as 'pretransfer' editing and involves the hydrolysis of activated Val-AMP. The other activity is designated 'posttransfer' editing and involves deacylation of mischarged Val-tRNA(Ile). The protein is Isoleucine--tRNA ligase of Streptococcus pyogenes serotype M18 (strain MGAS8232).